The following is a 261-amino-acid chain: Indole-3-glycerol phosphate synthase (261 aa).

The protein belongs to the TrpC family.

The enzyme catalyses 1-(2-carboxyphenylamino)-1-deoxy-D-ribulose 5-phosphate + H(+) = (1S,2R)-1-C-(indol-3-yl)glycerol 3-phosphate + CO2 + H2O. Its pathway is amino-acid biosynthesis; L-tryptophan biosynthesis; L-tryptophan from chorismate: step 4/5. The sequence is that of Indole-3-glycerol phosphate synthase from Paraburkholderia xenovorans (strain LB400).